A 491-amino-acid chain; its full sequence is Trypanothione reductase (491 aa).

35–51 (DLQKHHGPPHYAALGGT) provides a ligand contact to FAD. A disulfide bridge links Cys52 with Cys57. His461 functions as the Proton acceptor in the catalytic mechanism.

The protein belongs to the class-I pyridine nucleotide-disulfide oxidoreductase family. In terms of assembly, homodimer. It depends on FAD as a cofactor. In terms of processing, the N-terminus is blocked.

Its subcellular location is the cytoplasm. The catalysed reaction is trypanothione + NADP(+) = trypanothione disulfide + NADPH + H(+). Its function is as follows. Trypanothione is the parasite analog of glutathione; this enzyme is the equivalent of glutathione reductase. This Crithidia fasciculata protein is Trypanothione reductase (TPR).